The chain runs to 503 residues: 5'-3' exonuclease PLD4 (503 aa).

Residues 1–36 (MDKKKEHPEMRIPLQTAVEVSDWPCSTSHDPHSGLG) lie on the Cytoplasmic side of the membrane. A signal-anchor for type II membrane protein membrane pass occupies residues 37 to 57 (MVLGMLAVLGLSSVTLILFLW). The Lumenal segment spans residues 58-503 (QGATSFTSHR…RQVPSQDCVW (446 aa)). N89, N148, and N169 each carry an N-linked (GlcNAc...) asparagine glycan. Cysteines 92 and 248 form a disulfide. The region spanning 207–234 (TGGVLHSKFWVVDGRHIYVGSANMDWRS) is the PLD phosphodiesterase 1 domain. Catalysis depends on residues H212, K214, and D219. Catalysis depends on H212, which acts as the Proton donor. N-linked (GlcNAc...) asparagine glycosylation is found at N247, N279, N415, and N425. Residues C377 and C501 are joined by a disulfide bond. The 27-residue stretch at 421 to 447 (FSRVNHSKFMVTDKTAYVGTSNWSEDY) folds into the PLD phosphodiesterase 2 domain. Active-site residues include H426, K428, and D433. The Nucleophile role is filled by H426. Residue N442 is glycosylated (N-linked (GlcNAc...) asparagine).

This sequence belongs to the phospholipase D family. In terms of processing, highly N-glycosylated. Enriched in the white matter of early postnatal brains, as well as in splenic marginal zone cells. Highly expressed in dendritic cells (DCs) and other myeloid cells, with lower expression in B cell.

It is found in the endoplasmic reticulum membrane. The protein resides in the golgi apparatus. Its subcellular location is the trans-Golgi network membrane. It localises to the nucleus. The protein localises to the early endosome. It is found in the cytoplasmic vesicle. The protein resides in the phagosome. Its subcellular location is the lysosome. The enzyme catalyses Exonucleolytic cleavage in the 5'- to 3'-direction to yield nucleoside 3'-phosphates.. It catalyses the reaction a 5'-end 5'-dephospho-ribonucleotidyl-ribonucleotide-RNA + H2O = a ribonucleoside 3'-phosphate + a 5'-end dephospho-ribonucleoside-RNA + H(+). The catalysed reaction is a ribonucleoside 3'-phosphate-2'-3'-cyclophospho-GMP + H2O = a ribonucleoside 3'-phosphate + 2',3'-cyclophospho-GMP + H(+). It carries out the reaction a 5'-end 5'-dephospho-2'-deoxyribonucleotidyl-2'-deoxyribonucleotide in single-stranded DNA + H2O = a 5'-end dephospho-2'-deoxyribonucleoside in single-stranded DNA + a 2'-deoxyribonucleoside 3'-phosphate + H(+). The enzyme catalyses a 5'-end 5'-phospho-2'-deoxyribonucleotide in single-stranded DNA + H2O = a 5'-end 5'-dephospho-2'-deoxyribonucleotide in single-stranded DNA + phosphate. It catalyses the reaction a 3-lyso-sn-glycero-1-phospho-(3'-acyl-1'-sn-glycerol) + a 1-acyl-sn-glycerol = a 3-acyl-sn-glycero-1-phospho-(3'-acyl-1'-sn-glycerol) + glycerol. The catalysed reaction is 3-lyso-sn-glycero-1-phospho-(3'-(9Z-octadecenoyl)-1'-sn-glycerol) + 1-(9Z-octadecenoyl)-sn-glycerol = 3-(9Z-octadecenoyl)-sn-glycero-1-phospho-(3'-(9Z-octadecenoyl)-1'-sn-glycerol) + glycerol. Its activity is regulated as follows. The exonuclease activity toward ssDNA substrate is Ca(2+) and Mg(2+)-independent, but it is inhibited by Fe(2+), Cu(2+) and to a lesser extent Zn(2+) ions. Its function is as follows. 5'-&gt;3' exonuclease that hydrolyzes the phosphodiester bond of single-stranded DNA (ssDNA) and RNA molecules to form nucleoside 3'-monophosphates and 5'-end 5'-hydroxy deoxyribonucleotide/ribonucleotide fragments. Partially redundant with PLD4, can cleave all four nucleotides displaying higher efficiency for ssDNA and RNA fragments initiated with uridine and guanosine residues and lower efficiency for cytidine-initiated substrates. As a result, it does not always degrade polynucleotides to the single nucleotide level, it can stall at specific sites sparing certain fragments from exonucleolytic degradation. Processes self and pathogenic ssDNA and RNA molecules that reach the endolysosomal compartment via phagocytosis or autophagy and may serve as 'danger' signals for recognition by innate immune receptors such as toll-like receptors (TLRs). Degrades mitochondrial CpG-rich ssDNA fragments to prevent TLR9 activation and autoinflammatory response, but it can cleave viral RNA to generate ligands for TLR7 activation and initiate antiviral immune responses. In plasmacytoid dendritic cells, it cooperates with endonuclease RNASET2 to release 2',3'-cyclic guanosine monophosphate (2',3'-cGMP), a potent stimulatory ligand for TLR7. Produces 2',3'-cGMPs and cytidine-rich RNA fragments that occupy TLR7 ligand-binding pockets and trigger a signaling-competent state. Can exert polynucleotide phosphatase activity toward 5'-phosphorylated ssDNA substrates although at a slow rate. Transphosphatidylase that catalyzes the exchange with R to S stereo-inversion of the glycerol moiety between (S,R)-lysophosphatidylglycerol (LPG) and monoacylglycerol (MAG) substrates to yield (S,S)-bis(monoacylglycero)phosphate (BMP). Can synthesize a variety of (S,S)-BMPs representing the main phospholipid constituent of lysosomal intralumenal vesicle (ILV) membranes that bind acid hydrolases for lipid degradation. Regulates the homeostasis and interorganellar communication of the endolysosomal system with an overall impact on cellular removal of dysfunctional organelles via autophagy as well as proper protein and lipid turnover. May play a role in myotube formation in response to ER stress. In Mus musculus (Mouse), this protein is 5'-3' exonuclease PLD4.